The chain runs to 224 residues: Ribose-5-phosphate isomerase A (224 aa).

Residues 33–36 (TGST), 86–89 (DGAD), and 99–102 (KGGG) contribute to the substrate site. The active-site Proton acceptor is the Glu-108. Lys-126 provides a ligand contact to substrate.

The protein belongs to the ribose 5-phosphate isomerase family. In terms of assembly, homodimer.

It catalyses the reaction aldehydo-D-ribose 5-phosphate = D-ribulose 5-phosphate. The protein operates within carbohydrate degradation; pentose phosphate pathway; D-ribose 5-phosphate from D-ribulose 5-phosphate (non-oxidative stage): step 1/1. Its function is as follows. Catalyzes the reversible conversion of ribose-5-phosphate to ribulose 5-phosphate. The sequence is that of Ribose-5-phosphate isomerase A from Bordetella avium (strain 197N).